Here is a 414-residue protein sequence, read N- to C-terminus: NAC domain-containing protein 35 (414 aa).

Residues 1-21 (MAIVSSTTSIIPMSNQVNNNE) are compositionally biased toward polar residues. A disordered region spans residues 1–47 (MAIVSSTTSIIPMSNQVNNNEKGIEDNDHRGGQESHVQNEDEADDHD). Residues 22 to 47 (KGIEDNDHRGGQESHVQNEDEADDHD) are compositionally biased toward basic and acidic residues. Positions 51–198 (VMPGFRFHPT…EISLCRVYKR (148 aa)) constitute an NAC domain. A DNA-binding region spans residues 149–204 (IGLKKTLVFYSGKAPKGTRTSWIMNEYRLPHHETEKYQKAEISLCRVYKRPGVEDH). The segment at 200-251 (GVEDHPSVPRSLSTRHHNHNSSTSSRLALRQQQHHSSSSNHSDNNLNNNNNI) is disordered. The segment covering 233–251 (HHSSSSNHSDNNLNNNNNI) has biased composition (low complexity).

Expressed in aerial organs in early stages of seedling development.

Its subcellular location is the nucleus. Transcription factor that acts as a floral repressor. Controls flowering time by negatively regulating CONSTANS (CO) expression in a GIGANTEA (GI)-independent manner. Regulates the plant cold response by positive regulation of the cold response genes COR15A and KIN1. May coordinate cold response and flowering time. The sequence is that of NAC domain-containing protein 35 from Arabidopsis thaliana (Mouse-ear cress).